The sequence spans 420 residues: Gamma-glutamyl phosphate reductase (420 aa).

The protein belongs to the gamma-glutamyl phosphate reductase family.

It is found in the cytoplasm. The catalysed reaction is L-glutamate 5-semialdehyde + phosphate + NADP(+) = L-glutamyl 5-phosphate + NADPH + H(+). It participates in amino-acid biosynthesis; L-proline biosynthesis; L-glutamate 5-semialdehyde from L-glutamate: step 2/2. In terms of biological role, catalyzes the NADPH-dependent reduction of L-glutamate 5-phosphate into L-glutamate 5-semialdehyde and phosphate. The product spontaneously undergoes cyclization to form 1-pyrroline-5-carboxylate. This Streptococcus pneumoniae (strain Hungary19A-6) protein is Gamma-glutamyl phosphate reductase.